Reading from the N-terminus, the 562-residue chain is Ycf55-like protein (562 aa).

In terms of domain architecture, Response regulatory spans 7-125 (TIVIVDEDPV…DLVTGLKQVH (119 aa)).

The protein belongs to the ycf55 family.

This chain is Ycf55-like protein, found in Synechocystis sp. (strain ATCC 27184 / PCC 6803 / Kazusa).